We begin with the raw amino-acid sequence, 139 residues long: Arsenate reductase (139 aa).

Active-site nucleophile residues include Cys-10, Cys-82, and Cys-89. Cystine bridges form between Cys-10-Cys-82 and Cys-82-Cys-89.

It belongs to the low molecular weight phosphotyrosine protein phosphatase family. Thioredoxin-coupled ArsC subfamily.

It is found in the cytoplasm. It catalyses the reaction arsenate + [thioredoxin]-dithiol + H(+) = arsenite + [thioredoxin]-disulfide + H2O. Functionally, catalyzes the reduction of arsenate [As(V)] to arsenite [As(III)]. The chain is Arsenate reductase from Oceanobacillus iheyensis (strain DSM 14371 / CIP 107618 / JCM 11309 / KCTC 3954 / HTE831).